The primary structure comprises 572 residues: Mitochondrial chaperone TCM62 (572 aa).

A mitochondrion-targeting transit peptide spans 1–16; sequence MLRNCLRKLGNHQTKC. Residues 17 to 471 are Mitochondrial matrix-facing; sequence SVKTLHTPIY…KANEPNFMTK (455 aa). Residues 472–488 form a helical membrane-spanning segment; it reads VGINAVLSAVILPSEVA. At 489-572 the chain is on the mitochondrial intermembrane side; that stretch reads FKNAYGYNYY…VYKKPERHKA (84 aa).

The protein belongs to the chaperonin (HSP60) family. As to quaternary structure, forms a high molecular mass protein complex of approximately 850 kDa.

The protein resides in the mitochondrion inner membrane. Functionally, chaperone. Required for the assembly of succinate dehydrogenase subunits. Ensures mitochondrial gene expression at elevated temperatures and prevents heat-aggregation of the ribosomal subunit VAR1. This is Mitochondrial chaperone TCM62 (TCM62) from Saccharomyces cerevisiae (strain ATCC 204508 / S288c) (Baker's yeast).